Reading from the N-terminus, the 216-residue chain is UPF0502 protein VC0395_0676/VC395_A0574 (216 aa).

Belongs to the UPF0502 family.

This is UPF0502 protein VC0395_0676/VC395_A0574 from Vibrio cholerae serotype O1 (strain ATCC 39541 / Classical Ogawa 395 / O395).